The following is a 230-amino-acid chain: Inactive 2-(S)-hydroxypropyl-CoM dehydrogenase 2 (230 aa).

It belongs to the short-chain dehydrogenases/reductases (SDR) family.

This is Inactive 2-(S)-hydroxypropyl-CoM dehydrogenase 2 from Xanthobacter autotrophicus (strain ATCC BAA-1158 / Py2).